Reading from the N-terminus, the 298-residue chain is 4-diphosphocytidyl-2-C-methyl-D-erythritol kinase (298 aa).

Lysine 15 is an active-site residue. Residue 100–110 coordinates ATP; it reads PIAAGIGGGSA. Residue aspartate 142 is part of the active site.

This sequence belongs to the GHMP kinase family. IspE subfamily.

The catalysed reaction is 4-CDP-2-C-methyl-D-erythritol + ATP = 4-CDP-2-C-methyl-D-erythritol 2-phosphate + ADP + H(+). Its pathway is isoprenoid biosynthesis; isopentenyl diphosphate biosynthesis via DXP pathway; isopentenyl diphosphate from 1-deoxy-D-xylulose 5-phosphate: step 3/6. Catalyzes the phosphorylation of the position 2 hydroxy group of 4-diphosphocytidyl-2C-methyl-D-erythritol. This chain is 4-diphosphocytidyl-2-C-methyl-D-erythritol kinase, found in Rhodopseudomonas palustris (strain BisA53).